We begin with the raw amino-acid sequence, 449 residues long: tRNA(Ile)-lysidine synthase (449 aa).

35–40 (SGGIDS) contributes to the ATP binding site.

This sequence belongs to the tRNA(Ile)-lysidine synthase family.

The protein resides in the cytoplasm. It carries out the reaction cytidine(34) in tRNA(Ile2) + L-lysine + ATP = lysidine(34) in tRNA(Ile2) + AMP + diphosphate + H(+). In terms of biological role, ligates lysine onto the cytidine present at position 34 of the AUA codon-specific tRNA(Ile) that contains the anticodon CAU, in an ATP-dependent manner. Cytidine is converted to lysidine, thus changing the amino acid specificity of the tRNA from methionine to isoleucine. This Coxiella burnetii (strain RSA 493 / Nine Mile phase I) protein is tRNA(Ile)-lysidine synthase.